The sequence spans 138 residues: Large ribosomal subunit protein bL17 (138 aa).

Belongs to the bacterial ribosomal protein bL17 family. As to quaternary structure, part of the 50S ribosomal subunit. Contacts protein L32.

The polypeptide is Large ribosomal subunit protein bL17 (Methylorubrum populi (strain ATCC BAA-705 / NCIMB 13946 / BJ001) (Methylobacterium populi)).